The sequence spans 2009 residues: Sodium channel protein type 1 subunit alpha (2009 aa).

Residues 1 to 128 lie on the Cytoplasmic side of the membrane; that stretch reads MEQTVLVPPG…KIAIKILVHS (128 aa). Basic and acidic residues predominate over residues 28 to 48; the sequence is RIAEEKAKNPKPDKKDDDENG. Residues 28 to 60 are disordered; it reads RIAEEKAKNPKPDKKDDDENGPKPNSDLEAGKN. An I repeat occupies 110–454; sequence ILTPFNPLRK…QQMLEQLKKQ (345 aa). The chain crosses the membrane as a helical span at residues 129–146; it reads LFSMLIMCTILTNCVFMT. Over 147–152 the chain is Extracellular; the sequence is MSNPPD. A helical transmembrane segment spans residues 153–177; sequence WTKNVEYTFTGIYTFESLIKIIARG. At 178–188 the chain is on the cytoplasmic side; the sequence is FCLEDFTFLRD. The chain crosses the membrane as a helical span at residues 189–205; the sequence is PWNWLDFTVITFAYVTE. Over 206–213 the chain is Extracellular; the sequence is FVDLGNVS. The helical transmembrane segment at 214 to 235 threads the bilayer; it reads ALRTFRVLRALKTISVIPGLKT. At 236–245 the chain is on the cytoplasmic side; it reads IVGALIQSVK. A helical membrane pass occupies residues 246–269; that stretch reads KLSDVMILTVFCLSVFALIGLQLF. Residues 270–369 lie on the Extracellular side of the membrane; sequence MGNLRNKCVQ…YGYTSFDTFS (100 aa). 2 disulfide bridges follow: Cys-277/Cys-345 and Cys-336/Cys-351. 4 N-linked (GlcNAc...) asparagine glycosylation sites follow: Asn-295, Asn-301, Asn-306, and Asn-338. Positions 370 to 384 form an intramembrane region, pore-forming; sequence WAFLSLFRLMTQDFW. The Extracellular segment spans residues 385–397; that stretch reads ENLYQLTLRAAGK. Residues 398–423 traverse the membrane as a helical segment; the sequence is TYMIFFVLVIFLGSFYLINLILAVVA. Residues 424 to 768 are Cytoplasmic-facing; the sequence is MAYEEQNQAT…HIVNLVVMDP (345 aa). Residues 455-528 form a disordered region; the sequence is QEAAQQAAAT…EFHKSESEDS (74 aa). A compositionally biased stretch (low complexity) spans 456–466; that stretch reads EAAQQAAATTA. At Ser-470 the chain carries Phosphoserine. Low complexity predominate over residues 479 to 492; the sequence is LSDSSSEASKLSSK. Basic residues predominate over residues 495 to 506; the sequence is KERRNRRKKRKQ. A compositionally biased stretch (basic and acidic residues) spans 507–528; it reads KEQSGGEEKDDDEFHKSESEDS. Phosphoserine occurs at positions 523, 525, 550, 551, 607, and 730. The disordered stretch occupies residues 584-627; the sequence is VGSENDFADDEHSTFEDNESRRDSLFVPRRHGERRNSNLSQTSR. The span at 593 to 607 shows a compositional bias: basic and acidic residues; it reads DEHSTFEDNESRRDS. An II repeat occupies 750 to 1022; it reads CSPYWLKVKH…QIAVDRMHKG (273 aa). The chain crosses the membrane as a helical span at residues 769-787; it reads FVDLAITICIVLNTLFMAM. Residues 788–797 lie on the Extracellular side of the membrane; sequence EHYPMTEHFN. A helical transmembrane segment spans residues 798–820; the sequence is HVLTVGNLVFTGIFTAEMFLKII. Residues 821 to 830 are Cytoplasmic-facing; sequence AMDPYYYFQE. Residues 831–849 traverse the membrane as a helical segment; it reads GWNIFDGFIVTLSLVELGL. Over 850–854 the chain is Extracellular; sequence ANVEG. The helical transmembrane segment at 855–874 threads the bilayer; it reads LSVLRSFRLLRVFKLAKSWP. Over 875–891 the chain is Cytoplasmic; the sequence is TLNMLIKIIGNSVGALG. A helical transmembrane segment spans residues 892 to 912; sequence NLTLVLAIIVFIFAVVGMQLF. Over 913–938 the chain is Extracellular; the sequence is GKSYKDCVCKIATDCKLPRWHMNDFF. A disulfide bridge links Cys-921 with Cys-927. The pore-forming intramembrane region spans 939-952; that stretch reads HSFLIVFRVLCGEW. Topologically, residues 953–965 are extracellular; the sequence is IETMWDCMEVAGQ. Cys-959 and Cys-968 are joined by a disulfide. The helical transmembrane segment at 966–992 threads the bilayer; sequence AMCLTVFMMVMVIGNLVVLNLFLALLL. Residues 993 to 1218 lie on the Cytoplasmic side of the membrane; it reads SSFSADNLAA…RTCFRIVEHN (226 aa). Residues 1129–1163 are disordered; it reads TEDFSSESDLEESKEKLNESSSSSEGSTVDIGAPA. Residues 1200-1514 form an III repeat; sequence RGKQWWNLRR…KKYYNAMKKL (315 aa). A helical membrane pass occupies residues 1219–1237; sequence WFETFIVFMILLSSGALAF. Over 1238–1250 the chain is Extracellular; the sequence is EDIYIDQRKTIKT. Residues 1251 to 1276 traverse the membrane as a helical segment; sequence MLEYADKVFTYIFILEMLLKWVAYGY. Residues 1277–1278 are Cytoplasmic-facing; it reads QT. The helical transmembrane segment at 1279 to 1304 threads the bilayer; that stretch reads YFTNAWCWLDFLIVDVSLVSLTANAL. Over 1305 to 1313 the chain is Extracellular; that stretch reads GYSELGAIK. Residues 1314-1332 form a helical membrane-spanning segment; that stretch reads SLRTLRALRPLRALSRFEG. Topologically, residues 1333-1345 are cytoplasmic; sequence MRVVVNALLGAIP. The helical transmembrane segment at 1346 to 1369 threads the bilayer; that stretch reads SIMNVLLVCLIFWLIFSIMGVNLF. Topologically, residues 1370-1415 are extracellular; sequence AGKFYHCVNTTTGDIFEISEVNNHSDCLKLIERNETARWKNVKVNF. Cys-1376 and Cys-1396 are joined by a disulfide. Positions 1416-1433 form an intramembrane region, pore-forming; sequence DNVGFGYLSLLQVATFKG. Residues 1434–1457 lie on the Extracellular side of the membrane; that stretch reads WMDIMYAAVDSRNVELQPKYEESL. A helical transmembrane segment spans residues 1458–1483; the sequence is YMYLYFVIFIIFGSFFTLNLFIGVII. Topologically, residues 1484–1541 are cytoplasmic; that stretch reads DNFNQQKKKFGGQDIFMTEEQKKYYNAMKKLGSKKPQKPIPRPGNKFQGMVFDFVTRQ. Ser-1516 bears the Phosphoserine; by PKC mark. The IV repeat unit spans residues 1523-1821; sequence IPRPGNKFQG…WEKFDPDATQ (299 aa). A helical membrane pass occupies residues 1542-1560; it reads VFDISIMILICLNMVTMMV. Residues 1561–1571 lie on the Extracellular side of the membrane; sequence ETDDQSDYVTS. Residues 1561-1571 are S1-S2 loop of repeat IV; the sequence is ETDDQSDYVTS. Residues 1572 to 1593 traverse the membrane as a helical segment; the sequence is ILSRINLVFIVLFTGECVLKLI. The Cytoplasmic segment spans residues 1594-1601; the sequence is SLRHYYFT. A helical membrane pass occupies residues 1602–1623; it reads IGWNIFDFVVVILSIVGMFLAE. The segment at 1619–1636 is S3b-S4 loop of repeat IV; the sequence is MFLAELIEKYFVSPTLFR. The Extracellular segment spans residues 1624-1636; it reads LIEKYFVSPTLFR. The chain crosses the membrane as a helical span at residues 1637–1655; that stretch reads VIRLARIGRILRLIKGAKG. The Cytoplasmic segment spans residues 1656–1665; that stretch reads IRTLLFALMM. Residues 1666 to 1688 traverse the membrane as a helical segment; sequence SLPALFNIGLLLFLVMFIYAIFG. The Extracellular segment spans residues 1689 to 1711; it reads MSNFAYVKREVGIDDMFNFETFG. An intramembrane region (pore-forming) is located at residues 1712–1726; it reads NSMICLFQITTSAGW. At 1727–1759 the chain is on the extracellular side; it reads DGLLAPILNSKPPDCDPNKVNPGSSVKGDCGNP. A disulfide bridge links Cys-1741 with Cys-1756. Residues 1760-1788 form a helical membrane-spanning segment; that stretch reads SVGIFFFVSYIIISFLVVVNMYIAVILEN. At 1789-2009 the chain is on the cytoplasmic side; it reads FSVATEESAE…EGKDEKAKGK (221 aa). In terms of domain architecture, IQ spans 1915–1944; the sequence is EEVSAVIIQRAYRRHLLKRTVKQASFTYNK. Residues 1984-2009 form a disordered region; the sequence is PSYDRVTKPIVEKHEQEGKDEKAKGK. Residues 1988–2009 show a composition bias toward basic and acidic residues; the sequence is RVTKPIVEKHEQEGKDEKAKGK.

The protein belongs to the sodium channel (TC 1.A.1.10) family. Nav1.1/SCN1A subfamily. The Nav1.1 voltage-gated sodium channel consists of an ion-conducting alpha subunit SCN1A which is functional on its own regulated by one or more beta-1 (SCN1B), beta-2 (SCN2B), beta-3 (SCN3B) and beta-4 (SCN4B) subunits. SCN1B and SCN3B are non-covalently associated with SCN1A. SCN2B and SCN4B are disulfide-linked to SCN1A. SCN1B regulates both the expression at the plasma membrane and the voltage dependence of Nav1.1 inactivation. SCN3B and SCN4B reduce Nav1.1 conductance. Probably interacts with TMEM233; modulates the gating properties of NaV1.1. Interacts with FGF13; regulates the steady-state inactivation of Nav.1.1. In terms of processing, phosphorylation at Ser-1516 by PKC in a highly conserved cytoplasmic loop slows inactivation of the sodium channel and reduces peak sodium currents. As to expression, present in cerebellar Purkinje neurons (at protein level). Expressed by myelinated, non-C-fiber neurons in sensory ganglia.

Its subcellular location is the cell membrane. The enzyme catalyses Na(+)(in) = Na(+)(out). Activated by the spider toxins Hm1a and Hm1b (H.maculata, AC P60992 and AC P0DOC5) eliciting acute pain and mechanical allodynia. Functionally, pore-forming subunit of Nav1.1, a voltage-gated sodium (Nav) channel that directly mediates the depolarizing phase of action potentials in excitable membranes. Navs, also called VGSCs (voltage-gated sodium channels) or VDSCs (voltage-dependent sodium channels), operate by switching between closed and open conformations depending on the voltage difference across the membrane. In the open conformation they allow Na(+) ions to selectively pass through the pore, along their electrochemical gradient. The influx of Na(+) ions provokes membrane depolarization, initiating the propagation of electrical signals throughout cells and tissues. By regulating the excitability of neurons, ensures that they respond appropriately to synaptic inputs, maintaining the balance between excitation and inhibition in brain neural circuits. Nav1.1 plays a role in controlling the excitability and action potential propagation from somatosensory neurons, thereby contributing to the sensory perception of mechanically-induced pain. This chain is Sodium channel protein type 1 subunit alpha, found in Mus musculus (Mouse).